The following is a 94-amino-acid chain: Putative defensin-like protein 88 (94 aa).

The signal sequence occupies residues 1 to 26 (MATQKFSYFLLVLLMVFALILPSIIS). 3 cysteine pairs are disulfide-bonded: Cys-32–Cys-72, Cys-38–Cys-59, and Cys-48–Cys-71.

The protein belongs to the DEFL family.

It is found in the secreted. The polypeptide is Putative defensin-like protein 88 (Arabidopsis thaliana (Mouse-ear cress)).